We begin with the raw amino-acid sequence, 189 residues long: UPF0301 protein CF0373 (189 aa).

Belongs to the UPF0301 (AlgH) family.

This Chlamydia felis (strain Fe/C-56) (Chlamydophila felis) protein is UPF0301 protein CF0373.